The primary structure comprises 18562 residues: Titin homolog (18562 aa).

The Ig-like 1 domain occupies 90–176; sequence PKFIQVIKAY…GVSTSYGYIT (87 aa). The tract at residues 384–404 is disordered; it reads RFHPQPPKPPRAGTSRRFLPE. Ig-like domains are found at residues 406–493, 821–913, 943–1038, and 1135–1225; these read PKFV…TQVT, PKIV…AFIN, PKFI…LTIS, and PRFE…LTVD. Cysteine 842 and cysteine 897 are joined by a disulfide. Positions 1336–1360 are disordered; that stretch reads LPPVQKSMSVQEEKASSQRTPSPMN. Residues 1679–1762 enclose the Ig-like 6 domain; that stretch reads PKFLRKLVNC…ASNVAGTTFS (84 aa). Cysteine 1700 and cysteine 1751 are oxidised to a cystine. Coiled coils occupy residues 1766–1786, 2011–2038, and 2065–2085; these read LKLSEADDDAVDLLRQLSEIK, QSLDDQIKVTQQILKDVERDLNKMERTS, and ISDQLADRQSSEEALREALQE. A disordered region spans residues 2155-2177; the sequence is RKGSDKDKRKATRIKRVPSAHSA. Over residues 2163–2172 the composition is skewed to basic residues; that stretch reads RKATRIKRVP. Residues 2205-2231 are a coiled coil; sequence LKQNEEAKEIQELFVKIEKEINTIAEL. Disordered regions lie at residues 2298-2459 and 2614-2637; these read IIGI…TADA and KSSLKAAEEDEKEGEEEGEEEVTA. Positions 2309 to 2323 are enriched in low complexity; the sequence is RRPSSTPRGSTRSSN. The segment covering 2324–2341 has biased composition (polar residues); sequence LTTSQDSQATTKMTVSSE. A coiled-coil region spans residues 2606-2630; it reads LMQTLASEKSSLKAAEEDEKEGEEE. The span at 2621 to 2636 shows a compositional bias: acidic residues; that stretch reads EEDEKEGEEEGEEEVT. 2 Ig-like domains span residues 3095–3177 and 3179–3264; these read KEVM…SGLY and TERS…SFVS. Residues 3362-3692 are disordered; the sequence is EVPKVAEPSE…NAEAQKVVDS (331 aa). Over residues 3655–3665 the composition is skewed to acidic residues; that stretch reads SEEETPLEETN. Ig-like domains are found at residues 3789–3878, 3897–3985, and 4038–4125; these read PVFT…CEIV, PHFV…CTID, and PPYF…CVLT. 2 disulfides stabilise this stretch: cysteine 3919–cysteine 3969 and cysteine 4059–cysteine 4109. 14 disordered regions span residues 4553-4599, 4634-4699, 4750-4814, 4826-4855, 4912-4931, 4950-4969, 4989-5216, 5267-5294, 5306-5325, 5345-5372, 5428-6101, 6127-6157, 6214-6900, and 6930-8453; these read QSRE…SAPT, TVEP…EIVE, GSTA…TSEV, PVPETSAPSVEPTVEKLAPAESKETSEVQP, STAAPAQEPTVEKLAPVESK, PETSAPTVEPTVEKLKPVES, PETS…EILE, GSTAAPAQEPTVEKLAPVESKETSEVEP, PETSAPTVEPTVEKLKSVES, PETSAPTVEPTVEKLAPVDSKETSEVEP, GSTA…VEPT, VQVPETSSPTVEPTVEKLAPVESKETSEVQP, STAA…ETSE, and APVE…DDKL. The segment covering 4555-4577 has biased composition (basic and acidic residues); that stretch reads RELDNTERNFTVNKEKDESKKPS. PVET repeat units follow at residues 4599-4626, 4627-4665, 4666-4704, 4755-4787, 4788-4826, 4827-4865, 4917-4948, 4949-4987, 4988-5026, 5027-5065, 5066-5104, 5105-5143, 5144-5182, 5183-5221, 5273-5304, 5305-5343, 5344-5382, 5434-5465, 5466-5504, 5505-5543, 5544-5582, 5583-5621, 5622-5660, 5661-5699, 5700-5738, 5739-5777, 5778-5816, 5817-5855, 5856-5894, 5895-5933, 5934-5972, 5973-6011, 6012-6050, 6051-6089, 6090-6128, 6129-6167, 6219-6250, 6251-6289, 6290-6328, 6329-6367, 6368-6406, 6407-6445, 6446-6484, 6485-6523, 6524-6562, 6563-6601, 6602-6640, 6641-6679, 6680-6718, 6719-6757, 6758-6796, 6797-6835, 6836-6874, 6875-6913, 6914-6952, and 6953-6991; these read TVEKLAPVESKETPEVQAAEIVEQKDVP, VPETRAPTVEPTVEKHTPVDSKETSEVEPAEIVEQKDVP, VPETSAPTVEPTVEKHTPVESKEKSEVQPAEIVEQKDVT, PAQEPTVEKLAPVESKETSEVEPAEIVEQKDVP, VPETSAPSVEPTVEKLAPVESKETSEVQQAEIVEQKDVP, VPETSAPSVEPTVEKLAPAESKETSEVQPAEIVEQKDVT, AQEPTVEKLAPVESKETSEVQQAEIIEQKDVP, VPETSAPTVEPTVEKLKPVESKETSEVQQVEIIEQKDVP, VPETSAPTVEPTVEKLAPVESKETSEVQQAEIIEQKDVP, VPETSAPTVEPTVEKHAPVESKETSEVQPAEIVEQKVVP, VPETSAPTVEPTVEKLAPVESKETPEVQPAEILEQKDVT, AQEPTVEKLAPVESKETSEVEPAEIVEQKDVP, VPETSAPTVEPTVEKLKSVESKETSEVQQAEIIEQKDVP, VPETSAPTVEPTVEKLAPVDSKETSEVEPAEIVEQKDVT, VPETSAPTVEPTVEKLAPVESKETSEVEPAEIVEQKDVP, VPETSAPTVEPTIEKLAPVESKETSEVEPAEIVEQKDVS, VPETSAPTVEPTVEKLAPVESKETSEVQPAEIVEHKDVQ, VPETSSPTVEPTVEKLAPVESKETSEVEPAEIVEQKDVP, VPETSAPTVEPTVEKLAPVESKETSEVQPAEIVEQKDVS, VPETSAPTVEPTVEKLAPVESKETSEVQPAEIVEQKDVP, VPETSAPTVEPTIEKLAPVESKETSEVQPAEIVEHKDVQ, VPETSSPTVEPTVEKLAPVESKETSEVQPAEIVEQKDVT, AHEPTVEKLAPVESKETSEVEPAEIVEQKDVP, VPETSAPTVEPTVEKLAPVESKETSEVEPAEIVEQKDLP, VPETSAPTVEPTVEKLAPVESKKTSEVEPAEIVEQKDVP, VPETTATTFEPTKEKLAPVDSKETSEVQTAEIVEQKDVP, VPETSATTVEPTKEKLAPGESKETSEVQQAAIVEQKDVA, VPETSATTVEPTKEKLAPVESKETSEIQTAEIVEQKDVP, VPETSTSYVEPTKEKLAPGESKETSEVQQAAIVEQKDVP, VPETSATTVEPTKEKLAPVESKETSEIQQAAVVEQKDVP, VPETSATTVEPTKEKLAPVESKETSEVQQAAIVEQKDVP, VPEANAPTFEPTVEKLAPVESKETSEVQQAAIVEQKDVP, and VPEANAPTVEPTVEKLAPVESKETSVESKETQADAKLKK. 2 stretches are compositionally biased toward basic and acidic residues: residues 4638–4651 and 4677–4691; these read TVEKHTPVDSKETS and TVEKHTPVESKEKSE. Residues 4960-4969 are compositionally biased toward basic and acidic residues; that stretch reads TVEKLKPVES. A compositionally biased stretch (basic and acidic residues) spans 5038 to 5051; it reads TVEKLKPVESKETS. Basic and acidic residues-rich tracts occupy residues 5116–5129 and 5155–5168; these read TVEKLKPVESKETS and TVEKHAPVESKETS. Residues 5212-5235 are a coiled coil; it reads AEILEQKDVTCEEEIKELLTEVEV. Residues 5316-5325 are compositionally biased toward basic and acidic residues; that stretch reads TVEKLKSVES. 2 stretches are compositionally biased toward basic and acidic residues: residues 5477–5490 and 5516–5529; these read TVEKLKSVESKETS and TVEKHAPVESKETS. Composition is skewed to basic and acidic residues over residues 6690–6704, 6729–6743, 6768–6782, 6807–6821, 6846–6860, and 6885–6899; these read PTKEKLAPVDSKETS, PTKEKLAPGESKETS, and PTKEKLAPVESKETS. Basic and acidic residues-rich tracts occupy residues 6972–7606, 7613–7630, 7637–8062, and 8069–8453; these read ESKE…DNFK, LQKEKDDKLKQEKDDNFK, LQKE…DNFK, and LQKE…DDKL. Residues 6984-7812 adopt a coiled-coil conformation; sequence QADAKLKKEK…DKLKQETDAK (829 aa). BLUE repeat units follow at residues 6992–6996, 6997–7012, 7013–7028, 7029–7044, 7045–7060, 7061–7076, 7077–7092, 7093–7108, 7109–7124, 7125–7140, 7141–7156, 7157–7172, 7173–7188, 7189–7204, 7205–7220, 7221–7236, 7237–7252, 7253–7268, 7269–7284, 7285–7300, 7301–7316, 7317–7332, 7333–7348, 7349–7364, 7365–7380, 7381–7396, 7397–7412, 7413–7428, 7429–7444, 7445–7460, 7461–7476, 7477–7492, 7493–7508, 7509–7524, 7525–7540, 7541–7556, 7557–7572, 7573–7588, 7589–7604, 7605–7620, 7621–7628, 7629–7644, 7645–7652, 7653–7668, 7669–7684, 7685–7700, 7701–7716, 7717–7732, 7733–7748, 7749–7764, 7765–7772, 7773–7788, 7789–7804, 7805–7820, 7821–7836, 7837–7852, 7853–7868, 7869–7884, 7885–7900, 7901–7916, 7917–7932, 7933–7948, 7949–7964, 7965–7980, 7981–7996, 7997–8012, 8013–8028, 8029–8044, 8045–8060, 8061–8076, 8077–8084, 8085–8100, 8101–8116, 8117–8132, 8133–8148, 8149–8164, 8165–8180, 8181–8196, 8197–8212, 8213–8228, 8229–8244, 8245–8260, 8261–8276, 8277–8292, 8293–8308, 8309–8324, 8325–8340, 8341–8356, 8357–8371, 8373–8388, 8389–8404, 8405–8420, 8421–8436, 8437–8452, 8453–8468, and 8469–8484; these read EKDDK, HKQEADAKLQKENDDK, LKQEADAKLKKENDDK, LKQEAAAKLKKENDDK, LKQEADAKLQKENDDK, LKQEADAKLKKEKHDK, LKQEADAKLQKEKDDK, LKQEADAKLKKEKDDK, LKQDADAKLQKEKDDK, LKHEADAKLQKEKDDK, LKQEADAKLKKEKDDR, LKKDADAKLQKEKDDK, LKHEADAKLKKEKDDK, LKQDADAKLKKEKDDK, LKHEADAKLQKEKDDN, FKQEANAKLQKEKDDK, LKQEKDDN, LKQEKDDK, LKQEADAKLKKDKDDK, LKQEKNDK, LKQETDAKLKKDKDDK, LKQEADGKLKKEKDNK, LKQEANAKLQKEKDDK, LKQEADAKLQKEKDDN, LKQEADAKLKKEKDD, and LKQEADAKLKKEKGDK. Residues 7876–8273 adopt a coiled-coil conformation; sequence KLKKEKDNKL…EADAKLKKDK (398 aa). Positions 8316–8490 form a coiled coil; it reads KLKKEKDNKL…KGDKLKLEDQ (175 aa). Residues 8599 to 8611 are compositionally biased toward basic residues; the sequence is KHLKKKKKHHKKE. Residues 8599 to 8626 are disordered; the sequence is KHLKKKKKHHKKEKIAVKETEQDEKTVS. Residues 8612–8626 show a composition bias toward basic and acidic residues; it reads KIAVKETEQDEKTVS. One can recognise a Fibronectin type-III 1 domain in the interval 8950-9041; sequence KPRKAQLVAL…EIIEVNTLDY (92 aa). Disordered stretches follow at residues 9079 to 9104, 9147 to 9436, 9481 to 9609, 9702 to 10224, 10239 to 10274, 10539 to 11018, 11030 to 11111, 11123 to 11213, 11225 to 11387, 11420 to 11592, 11624 to 11825, 11872 to 11955, 11996 to 12054, 12397 to 12418, 12537 to 12974, 13026 to 13045, 13065 to 13261, 13283 to 13514, 13553 to 13574, and 13594 to 13874; these read IEEHRKLKKKSKKSKKTTDEPELDSE, VQKI…AAAE, EEQS…ETES, ADAV…ESRI, ESDDLSTASTIKLQKESDESGIDSRMGQTSEAEDSP, QSAP…DSFT, EDAV…QKDQ, KKLA…QDKT, AKTT…SLTS, KGLN…NPEL, LTKK…SDNL, LSAH…TSLS, TNLI…LQKN, GRRVMEASSDSELDDAKKRKKR, EESR…PAES, EAAKKQKEKDEQLKLETEVV, AAEA…LNDK, QAQA…EQLK, EEKQRLESEAATKKADAEKLKL, and EKLA…RRTG. Positions 9084–9093 are enriched in basic residues; it reads KLKKKSKKSK. Basic and acidic residues-rich tracts occupy residues 9172-9184 and 9191-9202; these read VKKDDKDVNKKSL and TKKEIQGKPEKK. Polar residues predominate over residues 9213-9231; it reads SSISETSETLTKDLTQTKQ. A compositionally biased stretch (basic and acidic residues) spans 9232–9267; it reads SEPEPAKRTTETSVQDEVKRKTETTSKSKQTTEEHP. Residues 9273–9283 show a composition bias toward low complexity; it reads SDSSISSTSDA. A compositionally biased stretch (basic and acidic residues) spans 9295–9332; it reads EAQKVTEKPETAKLESKSKMTEDTTKESDNKETVDEKP. Low complexity predominate over residues 9346–9359; sequence STISETSETSAVES. A coiled-coil region spans residues 9371–9510; sequence AAVDKEKKQK…QTKAKAAEKQ (140 aa). 2 stretches are compositionally biased toward basic and acidic residues: residues 9373–9436 and 9481–9521; these read VDKE…AAAE and EEQS…KSNK. A compositionally biased stretch (low complexity) spans 9547-9558; the sequence is SSISQKSDTSKT. Residues 9577–9749 adopt a coiled-coil conformation; that stretch reads TSKQKETDKK…QTVEEQAKLD (173 aa). 2 stretches are compositionally biased toward basic and acidic residues: residues 9578 to 9609 and 9702 to 9783; these read SKQKETDKKQKLEAEITAKKSADEKSKLETES and ADAV…DEKP. Positions 9798–9809 are enriched in polar residues; sequence SISQKSVTSKTV. Composition is skewed to basic and acidic residues over residues 9819–10004, 10040–10149, and 10162–10196; these read ETQK…DEKP, ETQK…KSEN, and VKSEPKKSDKTETVEKEVASSTEKSDDSKTKEPKE. Coiled-coil stretches lie at residues 9822 to 9995 and 10046 to 10129; these read KVAD…TEEA and EADK…TSKK. Residues 10197-10206 are compositionally biased toward basic residues; the sequence is KKKIIKKKKD. The span at 10207-10224 shows a compositional bias: basic and acidic residues; sequence TTKPQEASKELSSDESRI. Over residues 10239–10250 the composition is skewed to polar residues; the sequence is ESDDLSTASTIK. Residues 10461–10553 enclose the Fibronectin type-III 2 domain; it reads KPTSLQVTST…DTIEATTQAE (93 aa). A compositionally biased stretch (basic and acidic residues) spans 10566-10609; it reads EKVKEPVSKKPENTKESEGHKKRDRKESEDHDENNLGKSGKDEF. Polar residues predominate over residues 10612–10637; sequence SGESGTSNQNEESAQLNTSFTSTEQH. Over residues 10663-10680 the composition is skewed to acidic residues; that stretch reads IDADVVEVEYDEQGDDIP. Over residues 10707–10716 the composition is skewed to basic and acidic residues; the sequence is MAEKDSDAME. The segment covering 10779–10790 has biased composition (polar residues); sequence ADQTGMSIQDLN. 2 stretches are compositionally biased toward basic and acidic residues: residues 10840-10852 and 10863-10884; these read QLDKSQEVEDDKM and KKPESREVSGGKSEKSKEKESD. The span at 10961–10975 shows a compositional bias: polar residues; the sequence is LSTSEQVENASQNLG. Composition is skewed to basic and acidic residues over residues 10999-11009, 11045-11055, and 11076-11089; these read IHGEAESKLGE, SAEKTSLEVRD, and SNRDETSMEIRDLN. A coiled-coil region spans residues 11018 to 11064; sequence TLQDLYEELKAKEDAVEAGAETSNADQSAEKTSLEVRDMKKKMKKKQ. Positions 11090-11108 are enriched in polar residues; sequence TQHSNQTGEDESSTFNFGQ. Basic and acidic residues predominate over residues 11159-11173; the sequence is KKGEENEKTKFEAKH. Residues 11174-11187 show a composition bias toward low complexity; that stretch reads LGSSSASDSLAEST. Composition is skewed to basic and acidic residues over residues 11195–11211, 11271–11280, and 11295–11318; these read KGEVEKSELSIDMKNQD, IPDKNRDSDK, and ESAEAQKNESPEVKEISSFEEKTL. Over residues 11374–11387 the composition is skewed to polar residues; the sequence is SKVTTSFADESLTS. Composition is skewed to basic and acidic residues over residues 11440-11464 and 11472-11485; these read KVKDSDSLSSTDKKIGLKKSDKDQK and GSKDQESVGYEEKT. The span at 11503 to 11515 shows a compositional bias: polar residues; that stretch reads MTDQKNVQESQYA. Composition is skewed to basic and acidic residues over residues 11624–11635, 11645–11669, and 11722–11735; these read LTKKQDENDAKK, AKKDSDTLSITSKKDKFGKRQDSRE, and VSEKGHDTYSEKTV. The segment covering 11754-11767 has biased composition (polar residues); it reads ESLNASSALSTTDV. Residues 11916-11937 are compositionally biased toward basic and acidic residues; it reads AEDKYVESRKKTTLKKKPEQKQ. A coiled-coil region spans residues 12408–12428; the sequence is ELDDAKKRKKRRIKRVVERRN. The 116-residue stretch at 12432–12547 folds into the Ig-like 12 domain; the sequence is PRLTQLIPPR…ESRDDDKSVD (116 aa). Composition is skewed to basic and acidic residues over residues 12537 to 12547, 12555 to 12567, and 12609 to 12689; these read EESRDDDKSVD, LEEKKDDGDDKSK, and VGAK…KKDA. Residues 12690–12701 show a composition bias toward low complexity; it reads SQPSSSKESSPP. Residues 12729-12740 show a composition bias toward polar residues; that stretch reads TMHSETNITTTI. Composition is skewed to basic and acidic residues over residues 12766–12839, 12852–12865, and 12889–12940; these read ESAK…KNKS, ETKKDVSEIEEVPK, and PADD…DDKS. Positions 12797–12828 form a coiled coil; sequence KKSEKKDEVTAEKQSTEALIESKKKEVDESKI. A coiled-coil region spans residues 12980-13103; that stretch reads AEVNKAKKQK…LKLEEESAAK (124 aa). 7 stretches are compositionally biased toward basic and acidic residues: residues 13065-13124, 13133-13145, 13176-13191, 13203-13261, 13283-13327, 13337-13354, and 13361-13416; these read AAEA…KAGE, PTSKKTIDTKDVG, TDSEKVSKQKEQDEPT, EADK…LNDK, QAQA…EKQA, AVKKQKELDEKNKLEANK, and LKIE…DEKP. Residues 13237–13380 are a coiled coil; the sequence is LDAQEKIKKV…SKQTVEEQAK (144 aa). Residues 13431–13442 are compositionally biased toward polar residues; that stretch reads SISQKSETSKTV. The span at 13452–13514 shows a compositional bias: basic and acidic residues; that stretch reads ETQKVADAAR…KQKEKDEQLK (63 aa). The stretch at 13455-13628 forms a coiled coil; the sequence is KVADAARKQK…ETKSKQTEEA (174 aa). Positions 13594-13637 are enriched in basic and acidic residues; it reads EKLAQEQSRLEDEAKKSAEKQKLESETKSKQTEEAPKESVDEKP. Residues 13651 to 13662 show a composition bias toward low complexity; it reads SSISQKSKSAKS. The span at 13684–13696 shows a compositional bias: polar residues; it reads KVEQSPDESTSAT. Over residues 13697–13735 the composition is skewed to basic and acidic residues; that stretch reads IKRDPAQKTEEISKQDDGDEKKTTTDGKPPKPEDSEATP. Residues 13747-13760 are compositionally biased toward low complexity; the sequence is SDSVASDASLADVS. The span at 13761-13770 shows a compositional bias: basic and acidic residues; that stretch reads KLSDDVEEKP. Over residues 13784–13793 the composition is skewed to polar residues; sequence SVISETSSVD. Basic and acidic residues-rich tracts occupy residues 13795–13808 and 13824–13843; these read IKPESVEIPTEKAE and SEPKNAHKDDTEKTTDDMMT. One can recognise an Ig-like 13 domain in the interval 13963–14036; the sequence is PVDFVKYLPR…RAKYEDSGKY (74 aa). 3 consecutive Fibronectin type-III domains span residues 14153–14247, 14253–14348, and 14350–14448; these read APGD…TGSP, VEFP…TVEG, and VPEI…VLAD. Ig-like domains lie at 14451-14542, 14550-14634, and 14638-14727; these read PRVL…VGIS, SSFS…VIVN, and PHIL…LVFE. Cysteine 14568 and cysteine 14618 are joined by a disulfide. Fibronectin type-III domains lie at 14826-14920 and 14937-15027; these read APCD…TLES and ILRT…LVPG. Residues 15011 to 15180 are disordered; the sequence is VSSPSEETNP…TGKETTEKKK (170 aa). 2 stretches are compositionally biased toward basic and acidic residues: residues 15034–15060 and 15085–15117; these read KTEKKTDAAKSESEQKSAEEIVAEKQV and KVAENKGEETLQEVKEKLKKGKAVEKVQDESRR. The segment covering 15118–15132 has biased composition (polar residues); that stretch reads GSLQASSDNESVTTT. The span at 15133–15177 shows a compositional bias: basic and acidic residues; the sequence is SEKRSEAELEKNSEKSAEKKSTSADLEAADKAETEKSETGKETTE. 2 consecutive Ig-like domains span residues 15180–15274 and 15283–15371; these read KKVV…VSIA and PKVE…IALR. 2 Fibronectin type-III domains span residues 15383–15475 and 15503–15596; these read PTGP…LKKK and QIGK…TTES. The segment at 15470–15503 is disordered; it reads TTLKKKEETGKQKSEKSESDEKKSESDKVSELKQ. The span at 15473-15503 shows a compositional bias: basic and acidic residues; that stretch reads KKKEETGKQKSEKSESDEKKSESDKVSELKQ. 2 Ig-like domains span residues 15599 to 15687 and 15692 to 15786; these read PAFT…CKLT and PEIN…IQVT. The Fibronectin type-III 10 domain occupies 15791-15883; it reads APGKPAVEDQ…DESELVVVKN (93 aa). The Protein kinase domain occupies 15934–16189; that stretch reads YIIHEELGKG…VQDALRHPWI (256 aa). Residues 15940–15948 and lysine 15963 each bind ATP; that span reads LGKGAYGTV. Aspartate 16055 serves as the catalytic Proton acceptor. Residues 16206 to 16264 are autoinhibitory domain; that stretch reads KMQPKLDKSGVPARQKRNFLSLKRWSDDLLPIGRLAKRGAIFRRLTMDGVFERNIAFDT. Ig-like domains follow at residues 16268 to 16358, 16500 to 16575, 16605 to 16692, and 16705 to 16789; these read PSVK…AKLS, GKQL…VAKN, PRFR…FSVV, and PKFL…KDFT. 4 disulfide bridges follow: cysteine 16290–cysteine 16342, cysteine 16508–cysteine 16571, cysteine 16627–cysteine 16677, and cysteine 16726–cysteine 16778. The disordered stretch occupies residues 16805-16827; the sequence is LTPVRSRSRSRSRSPSVVGGEIQ. 3 consecutive Ig-like domains span residues 16829–16918, 16932–17025, and 17037–17126; these read PPVV…AIVV, PTFV…LTIS, and PYFI…TEVS. The tract at residues 17121 to 17169 is disordered; it reads QNTEVSVTKSKEVKEKKEKKKVEKKDEGKKKPGRPGLPRPSGASKTEQV. A compositionally biased stretch (basic and acidic residues) spans 17129–17150; it reads KSKEVKEKKEKKKVEKKDEGKK. The region spanning 17154-17245 is the Fibronectin type-III 11 domain; sequence RPGLPRPSGA…MTSTLKTASV (92 aa). Ig-like domains lie at 17249–17336, 17358–17447, 17457–17548, 17570–17661, 17676–17765, 17782–17873, 18008–18097, 18121–18213, 18224–18316, 18329–18417, and 18429–18519; these read PQFT…CQVT, PTLQ…CNVA, PSFS…VMIA, PRFT…TQVI, PKFT…QATT, PRFV…LNVS, PKFM…SEID, PNFI…LQVS, PPLF…MQLD, PRVF…LELT, and PKFN…MILS. Intrachain disulfides connect cysteine 17379–cysteine 17431 and cysteine 17478–cysteine 17530. An intrachain disulfide couples cysteine 17697 to cysteine 17754. The cysteines at positions 18143 and 18195 are disulfide-linked.

The protein belongs to the protein kinase superfamily. CAMK Ser/Thr protein kinase family. In terms of assembly, interacts (via C-terminus) with myosin. Interacts with actin. Mg(2+) is required as a cofactor. In terms of tissue distribution, expression is restricted to body wall, enteric and vulval muscles.

It localises to the cytoplasm. It is found in the myofibril. The protein resides in the sarcomere. Its subcellular location is the a band. The protein localises to the i band. It localises to the nucleus membrane. The enzyme catalyses L-seryl-[protein] + ATP = O-phospho-L-seryl-[protein] + ADP + H(+). It catalyses the reaction L-threonyl-[protein] + ATP = O-phospho-L-threonyl-[protein] + ADP + H(+). In terms of biological role, serine/threonine-protein kinase. Key component in the assembly and functioning of muscles. By providing connections at the level of individual microfilaments, it contributes to the fine balance of forces between the two halves of the sarcomere. The size and extensibility of the cross-links are the main determinants of sarcomere extensibility properties of muscle. In non-muscle cells, seems to play a role in chromosome condensation and chromosome segregation during mitosis. Might link the lamina network to chromatin or nuclear actin, or both during interphase. This is Titin homolog from Caenorhabditis elegans.